A 468-amino-acid polypeptide reads, in one-letter code: Argininosuccinate lyase (468 aa).

It belongs to the lyase 1 family. Argininosuccinate lyase subfamily.

It localises to the cytoplasm. It catalyses the reaction 2-(N(omega)-L-arginino)succinate = fumarate + L-arginine. It participates in amino-acid biosynthesis; L-arginine biosynthesis; L-arginine from L-ornithine and carbamoyl phosphate: step 3/3. The chain is Argininosuccinate lyase from Alkalilimnicola ehrlichii (strain ATCC BAA-1101 / DSM 17681 / MLHE-1).